The sequence spans 405 residues: Arginine biosynthesis bifunctional protein ArgJ (405 aa).

Residues Thr-152, Lys-178, Thr-189, Glu-276, Asn-400, and Thr-405 each contribute to the substrate site. The active-site Nucleophile is the Thr-189.

It belongs to the ArgJ family. In terms of assembly, heterotetramer of two alpha and two beta chains.

It is found in the cytoplasm. The catalysed reaction is N(2)-acetyl-L-ornithine + L-glutamate = N-acetyl-L-glutamate + L-ornithine. It carries out the reaction L-glutamate + acetyl-CoA = N-acetyl-L-glutamate + CoA + H(+). The protein operates within amino-acid biosynthesis; L-arginine biosynthesis; L-ornithine and N-acetyl-L-glutamate from L-glutamate and N(2)-acetyl-L-ornithine (cyclic): step 1/1. It functions in the pathway amino-acid biosynthesis; L-arginine biosynthesis; N(2)-acetyl-L-ornithine from L-glutamate: step 1/4. In terms of biological role, catalyzes two activities which are involved in the cyclic version of arginine biosynthesis: the synthesis of N-acetylglutamate from glutamate and acetyl-CoA as the acetyl donor, and of ornithine by transacetylation between N(2)-acetylornithine and glutamate. The chain is Arginine biosynthesis bifunctional protein ArgJ from Pseudomonas aeruginosa (strain ATCC 15692 / DSM 22644 / CIP 104116 / JCM 14847 / LMG 12228 / 1C / PRS 101 / PAO1).